The following is a 180-amino-acid chain: Ribulose bisphosphate carboxylase small subunit, chloroplastic 2 (180 aa).

The N-terminal 56 residues, 1 to 56 (MASMISSSAVTTVSRASRGQSAAVAPFGGLKSMTGFPVKKVNTDITSITSNGGRVK), are a transit peptide targeting the chloroplast.

The protein belongs to the RuBisCO small chain family. In terms of assembly, heterohexadecamer of 8 large and 8 small subunits.

The protein localises to the plastid. The protein resides in the chloroplast. Its function is as follows. RuBisCO catalyzes two reactions: the carboxylation of D-ribulose 1,5-bisphosphate, the primary event in carbon dioxide fixation, as well as the oxidative fragmentation of the pentose substrate. Both reactions occur simultaneously and in competition at the same active site. Although the small subunit is not catalytic it is essential for maximal activity. The sequence is that of Ribulose bisphosphate carboxylase small subunit, chloroplastic 2 from Pisum sativum (Garden pea).